A 189-amino-acid chain; its full sequence is Elongation factor P (189 aa).

The protein belongs to the elongation factor P family.

It is found in the cytoplasm. The protein operates within protein biosynthesis; polypeptide chain elongation. Functionally, involved in peptide bond synthesis. Stimulates efficient translation and peptide-bond synthesis on native or reconstituted 70S ribosomes in vitro. Probably functions indirectly by altering the affinity of the ribosome for aminoacyl-tRNA, thus increasing their reactivity as acceptors for peptidyl transferase. The protein is Elongation factor P of Pseudomonas putida (strain ATCC 700007 / DSM 6899 / JCM 31910 / BCRC 17059 / LMG 24140 / F1).